Here is a 1048-residue protein sequence, read N- to C-terminus: Ceruloplasmin (1048 aa).

The first 19 residues, methionine 1–alanine 19, serve as a signal peptide directing secretion. Plastocyanin-like domains are found at residues lysine 20–cysteine 200, lysine 209–cysteine 357, and asparagine 370–cysteine 554. 3 residues coordinate Na(+): tyrosine 55, glycine 64, and tyrosine 67. Positions 120 and 122 each coordinate Cu(2+). Residue histidine 120 participates in O2 binding. Lysine 128 provides a ligand contact to Ca(2+). Asparagine 138 carries an N-linked (GlcNAc...) asparagine glycan. 3 residues coordinate Ca(2+): glutamine 143, aspartate 146, and aspartate 147. A disulfide bridge connects residues cysteine 174 and cysteine 200. The Cu(2+) site is built by histidine 180 and histidine 182. Histidine 180 provides a ligand contact to O2. An N-linked (GlcNAc...) asparagine glycan is attached at asparagine 227. Residue serine 256 participates in Na(+) binding. The cysteines at positions 276 and 357 are disulfide-linked. The Cu(2+) site is built by histidine 295, cysteine 338, and histidine 343. Residues phenylalanine 408, glycine 417, and tyrosine 420 each coordinate Na(+). A disulfide bridge links cysteine 530 with cysteine 554. N-linked (GlcNAc...) asparagine glycans are attached at residues asparagine 556 and asparagine 582. Positions arginine 564–cysteine 712 constitute a Plastocyanin-like 4 domain. Residue serine 611 participates in Na(+) binding. A disulfide bridge connects residues cysteine 631 and cysteine 712. Cu(2+)-binding residues include histidine 650, cysteine 693, histidine 698, and methionine 703. Residue cysteine 693 is the Nucleophile; for glutathione peroxidase activity of the active site. Serine 716 bears the Phosphoserine mark. Plastocyanin-like domains are found at residues glycine 724–cysteine 894 and serine 902–glutamate 1044. An N-linked (GlcNAc...) asparagine glycan is attached at asparagine 756. Positions 761, 770, and 773 each coordinate Na(+). Residues cysteine 868 and cysteine 894 are joined by a disulfide bond. N-linked (GlcNAc...) asparagine glycosylation is present at asparagine 920. Residue serine 949 participates in Na(+) binding. Histidine 977, histidine 980, histidine 982, histidine 1022, cysteine 1023, histidine 1024, histidine 1028, and methionine 1033 together coordinate Cu(2+). O2-binding residues include histidine 980 and histidine 982. Residue histidine 1024 participates in O2 binding.

It belongs to the multicopper oxidase family. Found in a complex with MPO and LTF; interacts directly with MPO and LTF, which allows Fe(3+) incorporation into LTF, activation of CP ferroxidase activity and protection of CP antioxidant properties by MPO. Cu(2+) is required as a cofactor. Expressed by the liver and secreted in plasma. Also expressed in the hypothalamus, spleen and uterus. No expression in the cortex, heart, intestine or kidney.

The protein localises to the secreted. The enzyme catalyses 4 Fe(2+) + O2 + 4 H(+) = 4 Fe(3+) + 2 H2O. It carries out the reaction 4 Cu(+) + O2 + 4 H(+) = 4 Cu(2+) + 2 H2O. The catalysed reaction is a hydroperoxide + 2 glutathione = an alcohol + glutathione disulfide + H2O. It catalyses the reaction 4 nitric oxide + O2 + 2 H2O = 4 nitrite + 4 H(+). The enzyme catalyses 2 glutathione + H2O2 = glutathione disulfide + 2 H2O. Functionally, multifunctional blue, copper-binding (6-7 atoms per molecule) glycoprotein. It has ferroxidase activity oxidizing Fe(2+) to Fe(3+) without releasing radical oxygen species. It is involved in iron transport across the cell membrane. Copper ions provide a large number of enzymatic activites. Oxidizes highly toxic ferrous ions to the ferric state for further incorporation onto apo-transferrins, catalyzes Cu(+) oxidation and promotes the oxidation of biogenic amines such as norepinephrin and serotonin. Provides Cu(2+) ions for the ascorbate-mediated deaminase degradation of the heparan sulfate chains of GPC1. Has glutathione peroxidase-like activity, can remove both hydrogen peroxide and lipid hydroperoxide in the presence of thiols. Also shows NO-oxidase and NO2 synthase activities that determine endocrine NO homeostasis. The chain is Ceruloplasmin (CP) from Ovis aries (Sheep).